Consider the following 377-residue polypeptide: Succinyl-diaminopimelate desuccinylase (377 aa).

H67 provides a ligand contact to Zn(2+). Residue D69 is part of the active site. A Zn(2+)-binding site is contributed by D100. Catalysis depends on E134, which acts as the Proton acceptor. Residues E135, E163, and H349 each contribute to the Zn(2+) site.

It belongs to the peptidase M20A family. DapE subfamily. As to quaternary structure, homodimer. Zn(2+) serves as cofactor. It depends on Co(2+) as a cofactor.

It catalyses the reaction N-succinyl-(2S,6S)-2,6-diaminopimelate + H2O = (2S,6S)-2,6-diaminopimelate + succinate. It functions in the pathway amino-acid biosynthesis; L-lysine biosynthesis via DAP pathway; LL-2,6-diaminopimelate from (S)-tetrahydrodipicolinate (succinylase route): step 3/3. Catalyzes the hydrolysis of N-succinyl-L,L-diaminopimelic acid (SDAP), forming succinate and LL-2,6-diaminopimelate (DAP), an intermediate involved in the bacterial biosynthesis of lysine and meso-diaminopimelic acid, an essential component of bacterial cell walls. This chain is Succinyl-diaminopimelate desuccinylase, found in Dechloromonas aromatica (strain RCB).